A 60-amino-acid polypeptide reads, in one-letter code: Large ribosomal subunit protein bL32 (60 aa).

Residues 1–28 are disordered; that stretch reads MAVQQNKKSRSARDMRRSHDALEASTLS. A compositionally biased stretch (basic and acidic residues) spans 11 to 22; the sequence is SARDMRRSHDAL.

This sequence belongs to the bacterial ribosomal protein bL32 family.

The polypeptide is Large ribosomal subunit protein bL32 (Pseudomonas savastanoi pv. phaseolicola (strain 1448A / Race 6) (Pseudomonas syringae pv. phaseolicola (strain 1448A / Race 6))).